The primary structure comprises 366 residues: Neuropeptide Y receptor type 1 (366 aa).

Residues 1–39 lie on the Extracellular side of the membrane; that stretch reads MNFSTYFENLSVPNNISGNITFPISEDCALPLPMIFTLA. 3 N-linked (GlcNAc...) asparagine glycosylation sites follow: asparagine 2, asparagine 9, and asparagine 15. Residues 40-60 traverse the membrane as a helical segment; the sequence is LAYGAVIILGLSGNLALIIII. Over 61 to 82 the chain is Cytoplasmic; it reads LKQKEMRNVTNILIVNLSFSDL. The chain crosses the membrane as a helical span at residues 83 to 103; that stretch reads LATIMCLPFTLIYTLMDHWIF. Residues 104 to 111 are Extracellular-facing; the sequence is GEVMCKLN. An intrachain disulfide couples cysteine 108 to cysteine 193. A helical transmembrane segment spans residues 112-132; sequence EYIQCVSVTVSIFSLVLIAIE. The Cytoplasmic segment spans residues 133-149; the sequence is RHQLIINPRGWRPNNRH. The chain crosses the membrane as a helical span at residues 150-170; it reads ACFGITVIWGFAMACSTPLMM. At 171–203 the chain is on the extracellular side; sequence YSVLTDEPFKNISLDSYIGKYVCLEDFPEDKFR. N-linked (GlcNAc...) asparagine glycosylation occurs at asparagine 181. Residues 204–224 form a helical membrane-spanning segment; sequence LSYTTLLFILQYLGPLCFIFV. The Cytoplasmic segment spans residues 225–260; the sequence is CYTKIFLRLKRRNNMMDKIRDNKYRSSETKRINIML. A helical transmembrane segment spans residues 261-281; sequence LSIVVGFALCWLPFFIFNLVF. At 282–294 the chain is on the extracellular side; it reads DWNHEAVATCNHN. A helical transmembrane segment spans residues 295–315; that stretch reads LLFLICHLTAMISTCVNPIFY. Over 316 to 366 the chain is Cytoplasmic; that stretch reads GFLNKNFQRDLQFFFNFCDFRSREDDYETIAMSTMHTDVSKTSLKQASPIA. Cysteine 333 carries the S-palmitoyl cysteine lipid modification.

This sequence belongs to the G-protein coupled receptor 1 family.

Its subcellular location is the cell membrane. In terms of biological role, receptor for neuropeptide Y and peptide YY. The sequence is that of Neuropeptide Y receptor type 1 (npy1r) from Xenopus laevis (African clawed frog).